We begin with the raw amino-acid sequence, 345 residues long: Methionine import ATP-binding protein MetN (345 aa).

Residues 2–241 form the ABC transporter domain; the sequence is IKLKNISKVF…PKTLLAQEFI (240 aa). Residue 38–45 participates in ATP binding; the sequence is GASGAGKS.

The protein belongs to the ABC transporter superfamily. Methionine importer (TC 3.A.1.24) family. In terms of assembly, the complex is composed of two ATP-binding proteins (MetN), two transmembrane proteins (MetI) and a solute-binding protein (MetQ).

The protein localises to the cell inner membrane. The catalysed reaction is L-methionine(out) + ATP + H2O = L-methionine(in) + ADP + phosphate + H(+). The enzyme catalyses D-methionine(out) + ATP + H2O = D-methionine(in) + ADP + phosphate + H(+). Part of the ABC transporter complex MetNIQ involved in methionine import. Responsible for energy coupling to the transport system. In Histophilus somni (strain 129Pt) (Haemophilus somnus), this protein is Methionine import ATP-binding protein MetN.